The following is a 148-amino-acid chain: Putative nickel-responsive regulator (148 aa).

The Ni(2+) site is built by His88, His99, His101, and Cys107.

The protein belongs to the transcriptional regulatory CopG/NikR family. Requires Ni(2+) as cofactor.

Transcriptional regulator. In Helicobacter pylori (strain HPAG1), this protein is Putative nickel-responsive regulator.